A 40-amino-acid polypeptide reads, in one-letter code: Esterase-4 (40 aa).

This sequence belongs to the type-B carboxylesterase/lipase family.

The catalysed reaction is a carboxylic ester + H2O = an alcohol + a carboxylate + H(+). This is Esterase-4 (Est-4) from Drosophila mojavensis (Fruit fly).